The following is a 151-amino-acid chain: Neuroglobin (151 aa).

Residues 1–149 enclose the Globin domain; sequence MELPEPELIR…VVQAMSRGWG (149 aa). Histidine 64 and histidine 96 together coordinate heme b.

Belongs to the globin family. Monomer. Homodimer and homotetramer; disulfide-linked. Mainly monomeric but also detected as part of homodimers and homotetramers. Interacts with 14-3-3 proteins; regulates the phosphorylation of NGB. Could interact (ferrous form) with G-alpha(i) proteins (GTP-bound form). Post-translationally, phosphorylated during hypoxia by ERK1/ERK2. Phosphorylation regulates the heme pocket hexacoordination preventing the association of His-64 with the heme metal center. Thereby, promotes the access of dioxygen and nitrite to the heme and stimulates the nitrite reductase activity. Phosphorylation during hypoxia is stabilized by 14-3-3 proteins.

The protein resides in the cytoplasm. The protein localises to the cytosol. It localises to the mitochondrion matrix. It carries out the reaction Fe(III)-heme b-[protein] + nitric oxide + H2O = Fe(II)-heme b-[protein] + nitrite + 2 H(+). In terms of biological role, monomeric globin with a bis-histidyl six-coordinate heme-iron atom through which it can bind dioxygen, carbon monoxide and nitric oxide. Could help transport oxygen and increase its availability to the metabolically active neuronal tissues, though its low quantity in tissues as well as its high affinity for dioxygen, which may limit its oxygen-releasing ability, argue against it. The ferrous/deoxygenated form exhibits a nitrite reductase activity and it could produce nitric oxide which in turn inhibits cellular respiration in response to hypoxia. In its ferrous/deoxygenated state, it may also exhibit GDI (Guanine nucleotide Dissociation Inhibitor) activity toward heterotrimeric G-alpha proteins, thereby regulating signal transduction to facilitate neuroprotective responses in the wake of hypoxia and associated oxidative stress. The polypeptide is Neuroglobin (Bos taurus (Bovine)).